A 66-amino-acid polypeptide reads, in one-letter code: Large ribosomal subunit protein bL32 (66 aa).

It belongs to the bacterial ribosomal protein bL32 family.

The polypeptide is Large ribosomal subunit protein bL32 (Leptospira interrogans serogroup Icterohaemorrhagiae serovar copenhageni (strain Fiocruz L1-130)).